The primary structure comprises 216 residues: Outer-membrane lipoprotein LolB (216 aa).

The first 24 residues, 1–24 (MNNLNYFTKISASCAALALMTLAG), serve as a signal peptide directing secretion. Cys-25 carries the N-palmitoyl cysteine lipid modification. Cys-25 carries the S-diacylglycerol cysteine lipid modification.

Belongs to the LolB family. Monomer.

The protein localises to the cell outer membrane. Its function is as follows. Plays a critical role in the incorporation of lipoproteins in the outer membrane after they are released by the LolA protein. The sequence is that of Outer-membrane lipoprotein LolB from Shewanella loihica (strain ATCC BAA-1088 / PV-4).